The primary structure comprises 240 residues: Regulatory protein HlyX (240 aa).

The segment at 15–28 (CTIHCQNCSISQLC) is essential for the oxygen-regulated activity. Positions 163–236 (MSAEEKLAAF…GKYITINRMD (74 aa)) constitute an HTH crp-type domain. The H-T-H motif DNA-binding region spans 196 to 215 (RGDIGNYLGLTIETISRLLG).

It localises to the cytoplasm. Confers a hemolytic phenotype on E.coli. May regulate, rather than mediate, hemolytic activity. The polypeptide is Regulatory protein HlyX (hlyX) (Actinobacillus pleuropneumoniae (Haemophilus pleuropneumoniae)).